The following is a 318-amino-acid chain: tRNA U34 carboxymethyltransferase (318 aa).

Residues K88, W102, K107, G126, M192, Y196, and R311 each coordinate carboxy-S-adenosyl-L-methionine.

The protein belongs to the class I-like SAM-binding methyltransferase superfamily. CmoB family. As to quaternary structure, homotetramer.

It carries out the reaction carboxy-S-adenosyl-L-methionine + 5-hydroxyuridine(34) in tRNA = 5-carboxymethoxyuridine(34) in tRNA + S-adenosyl-L-homocysteine + H(+). Catalyzes carboxymethyl transfer from carboxy-S-adenosyl-L-methionine (Cx-SAM) to 5-hydroxyuridine (ho5U) to form 5-carboxymethoxyuridine (cmo5U) at position 34 in tRNAs. The protein is tRNA U34 carboxymethyltransferase of Pseudomonas fluorescens (strain ATCC BAA-477 / NRRL B-23932 / Pf-5).